Consider the following 355-residue polypeptide: MVRASSSKKGGSKGGDKDDAESKQRKRLKTLALDNQLLSDSPAKSHSSLKPSKQVLKHHGTDIIRKSQRKNRFLFSFPGLLAPISAATIGDLDRLSTKNPVLYLNFPQGRMKLFGTILYPKNRYLTLQFSRGGKNVLCDDYFDNMIVFSESWWIGTKEENPEEARLDFPKELAQAENTEFDFQGGAGGAASVKKLASPEIGSQPTETDSPEVDNEDVLSEDGEFLDDKIQVTPPVQLTPPVQVTPVRQSQRNSGKKFNFAETSSEASSGESEGNTSDEDEKPLLEPESSTRSREESQDGNGITASASKLPEELPAKREKLKSKDSKLVQATLSNLFKKAEEKTAGTSKAKSSSKA.

Disordered regions lie at residues 1–26, 181–215, and 229–355; these read MVRA…KQRK, DFQG…VDNE, and IQVT…SSKA. Residues 14-23 are compositionally biased toward basic and acidic residues; sequence GGDKDDAESK. Low complexity-rich tracts occupy residues 230 to 246 and 260 to 274; these read QVTP…VTPV and AETS…SEGN. Basic and acidic residues-rich tracts occupy residues 281–296 and 309–326; these read KPLL…REES and LPEE…KDSK. The segment covering 344 to 355 has biased composition (low complexity); that stretch reads AGTSKAKSSSKA.

As to quaternary structure, interacts with BIN4 and TOP6A, but not with TOP6B. In terms of tissue distribution, expressed inproliferating and endoreduplicating cells.

It is found in the nucleus. Its function is as follows. Component of the DNA topoisomerase VI complex involved in chromatin organization and progression of endoreduplication cycles. Binds to DNA. Required for endoreduplication beyond 8C. The protein is DNA-binding protein RHL1 (RHL1) of Arabidopsis thaliana (Mouse-ear cress).